The sequence spans 188 residues: Transmembrane protein 160 (188 aa).

The transit peptide at 1-96 directs the protein to the mitochondrion; that stretch reads MGGGWWWARA…ISFMQSDMGR (96 aa). Positions 24-52 are disordered; the sequence is PPQRPRSGGARGSFAPGHGPRAGASPPPV. Ser48 is subject to Phosphoserine. The next 2 helical transmembrane spans lie at 102–122 and 135–155; these read FFLL…VGLA and AAVG…AVGL. The interval 168-188 is disordered; that stretch reads PEDDGTASAEGPDEAGRPPPE.

It belongs to the TMEM160 family.

The protein resides in the mitochondrion inner membrane. This Homo sapiens (Human) protein is Transmembrane protein 160.